A 354-amino-acid polypeptide reads, in one-letter code: MNSKRIIILAGGSGGHVFPGLTIAKHLIKKGWDINWIGTKNKIESEIIPKCNIKIHFIKIQGLRNSSLKNLIMTPINVLNSYLQVRKIIKNWIPDIILGMGGYVSGPGGLAAWSCKIPFILHEQNKIAGITNKLLSKISTKNMQAFSGTLLNAEIVGNPIRKNIIDIPPPIKRFKNRKGPLRILIIGGSQGASIFNKILPKISFFLQEKAIIWHQSGNNDLQKTRKKYKKYSTYKHIVSSFIKNIAEAYEWADIIISRSGALTVSEITVVGLGAIFIPYPHKDKQQYLNAEDLENNGAAKIIEQSMFTAELIIKILNSLNREKLFIMAKKAYSLGIRNSTSKISKIIHDVSNKI.

UDP-N-acetyl-alpha-D-glucosamine-binding positions include 13 to 15, Asn-125, Arg-161, Ser-189, Ile-242, 261 to 266, and Gln-286; these read SGG and ALTVSE.

It belongs to the glycosyltransferase 28 family. MurG subfamily.

The protein resides in the cell inner membrane. It carries out the reaction di-trans,octa-cis-undecaprenyl diphospho-N-acetyl-alpha-D-muramoyl-L-alanyl-D-glutamyl-meso-2,6-diaminopimeloyl-D-alanyl-D-alanine + UDP-N-acetyl-alpha-D-glucosamine = di-trans,octa-cis-undecaprenyl diphospho-[N-acetyl-alpha-D-glucosaminyl-(1-&gt;4)]-N-acetyl-alpha-D-muramoyl-L-alanyl-D-glutamyl-meso-2,6-diaminopimeloyl-D-alanyl-D-alanine + UDP + H(+). It participates in cell wall biogenesis; peptidoglycan biosynthesis. In terms of biological role, cell wall formation. Catalyzes the transfer of a GlcNAc subunit on undecaprenyl-pyrophosphoryl-MurNAc-pentapeptide (lipid intermediate I) to form undecaprenyl-pyrophosphoryl-MurNAc-(pentapeptide)GlcNAc (lipid intermediate II). The protein is UDP-N-acetylglucosamine--N-acetylmuramyl-(pentapeptide) pyrophosphoryl-undecaprenol N-acetylglucosamine transferase of Buchnera aphidicola subsp. Schizaphis graminum (strain Sg).